Here is a 173-residue protein sequence, read N- to C-terminus: Alpha-crystallin A chain (173 aa).

Residue M1 is modified to N-acetylmethionine. Residues 1-63 (MDIAIQQPWF…RTVLDSGVSE (63 aa)) are required for complex formation with BFSP1 and BFSP2. Q6 is subject to Deamidated glutamine; partial. S45 carries the phosphoserine modification. Q50 bears the Deamidated glutamine; partial mark. Positions 52 to 162 (LFRTVLDSGV…GHSERAIPVS (111 aa)) constitute a sHSP domain. N6-acetyllysine occurs at positions 70 and 99. Residue H100 participates in Zn(2+) binding. N101 carries the post-translational modification Deamidated asparagine; partial. Zn(2+) contacts are provided by E102 and H107. A Phosphoserine modification is found at S122. N123 carries the deamidated asparagine; partial modification. A disordered region spans residues 144–173 (PKVPSGVDAGHSERAIPVSREEKPSSAPSS). A compositionally biased stretch (basic and acidic residues) spans 153 to 167 (GHSERAIPVSREEKP). Position 154 (H154) interacts with Zn(2+). S162 carries O-linked (GlcNAc) serine glycosylation.

Belongs to the small heat shock protein (HSP20) family. Heteromer composed of three CRYAA and one CRYAB subunits. Inter-subunit bridging via zinc ions enhances stability, which is crucial as there is no protein turn over in the lens. Can also form homodimers and homotetramers (dimers of dimers) which serve as the building blocks of homooligomers. Within homooligomers, the zinc-binding motif is created from residues of 3 different molecules. His-100 and Glu-102 from one molecule are ligands of the zinc ion, and His-107 and His-154 residues from additional molecules complete the site with tetrahedral coordination geometry. Part of a complex required for lens intermediate filament formation composed of BFSP1, BFSP2 and CRYAA. In terms of processing, acetylation at Lys-70 may increase chaperone activity. Undergoes age-dependent proteolytical cleavage at the C-terminus.

It is found in the cytoplasm. The protein resides in the nucleus. In terms of biological role, contributes to the transparency and refractive index of the lens. Acts as a chaperone, preventing aggregation of various proteins under a wide range of stress conditions. Required for the correct formation of lens intermediate filaments as part of a complex composed of BFSP1, BFSP2 and CRYAA. This chain is Alpha-crystallin A chain (CRYAA), found in Neovison vison (American mink).